We begin with the raw amino-acid sequence, 666 residues long: ATP-dependent zinc metalloprotease FtsH (666 aa).

The tract at residues 1-23 (MSREVTSGLPQDKPTGSAPPPPP) is disordered. Over 1-27 (MSREVTSGLPQDKPTGSAPPPPPPWRR) the chain is Cytoplasmic. The helical transmembrane segment at 28–48 (WLLPIGLLVSLVLLFTFPMRP) threads the bilayer. The Extracellular segment spans residues 49-125 (SSGKTLTYSE…RPPGPSLASQ (77 aa)). Residues 126–146 (VLAGVLSFLPFLLLLGLFAYS) traverse the membrane as a helical segment. Topologically, residues 147–666 (GRRAGAGFLA…RTAASSDDLL (520 aa)) are cytoplasmic. ATP is bound at residue 219-226 (GPPGTGKT). Residue H442 coordinates Zn(2+). E443 is an active-site residue. 2 residues coordinate Zn(2+): H446 and D518. Positions 626–666 (PEEHREAAARHVRRPGIAAATGASMAGGSEPRTAASSDDLL) are disordered. Over residues 641 to 653 (GIAAATGASMAGG) the composition is skewed to low complexity.

In the central section; belongs to the AAA ATPase family. This sequence in the C-terminal section; belongs to the peptidase M41 family. In terms of assembly, homohexamer. Requires Zn(2+) as cofactor.

It localises to the cell membrane. Its function is as follows. Acts as a processive, ATP-dependent zinc metallopeptidase for both cytoplasmic and membrane proteins. Plays a role in the quality control of integral membrane proteins. This chain is ATP-dependent zinc metalloprotease FtsH, found in Acidothermus cellulolyticus (strain ATCC 43068 / DSM 8971 / 11B).